The following is a 630-amino-acid chain: MIYHEIYDVIVVGGGHAGTEAALAPARMGLKTLLLTHNVDTLGQMSCNPAIGGIGKGHLVKEIDAMGGLMAIAIDQAGIQFRTLNSSKGPAVRATRAQADRVLYRQAVRTALENQPNLDIFQQEVVDILVENNRAVGAVTKMGLTFKARSVVLTAGTFLAGKIHIGLDNYAGGRAGDPSATMLADRLRDLNLRVDRLKTGTPPRLDARTINFDVLAKQHGDAELPVMSFMGAVDLHPRQIPCYITHTNEQTHDLIRNSLDRSPMYTGVIEGSGPRYCPSIEDKVMRFSDRNSHQIYLEPEGLSTIEVYPNGISTSLPFDVQMGIVNSMKGLEKTRIIKPGYAIEYDYFDPRDLKPTLETKAIEGLFFAGQINGTTGYEEAAAQGLLAGINAALQVQGKEAWFPTRDLAYTGVLVDDLCTLGTKEPYRVFTSRAEYRLLLREDNADIRLTPIAHELGLIDDARWARFNQKMENIERERERLKQIWIHPQSEHLAVVNELVNSPLTREASGEDLLRRPEVTYDKLTQVAAFAPALDDKQAAEQVEISIKYQGYIEHQQNEIERHKRHENTLIPAEFDYDKVESLSNEVRAKLMQHRPVSIGQASRISGITPAAISILLVNLKKQGMLKRGEL.

Position 13–18 (13–18 (GGGHAG)) interacts with FAD. 273–287 (GPRYCPSIEDKVMRF) lines the NAD(+) pocket.

The protein belongs to the MnmG family. Homodimer. Heterotetramer of two MnmE and two MnmG subunits. FAD is required as a cofactor.

It is found in the cytoplasm. Its function is as follows. NAD-binding protein involved in the addition of a carboxymethylaminomethyl (cmnm) group at the wobble position (U34) of certain tRNAs, forming tRNA-cmnm(5)s(2)U34. This is tRNA uridine 5-carboxymethylaminomethyl modification enzyme MnmG from Actinobacillus pleuropneumoniae serotype 3 (strain JL03).